The primary structure comprises 338 residues: Ketol-acid reductoisomerase (NADP(+)) (338 aa).

The 181-residue stretch at 1-181 folds into the KARI N-terminal Rossmann domain; it reads MKIYYDKDCN…GGGRAGIIET (181 aa). Residues 24-27, lysine 47, serine 50, serine 52, and 82-85 each bind NADP(+); these read YGSQ and DEIQ. The active site involves histidine 107. Glycine 133 is a binding site for NADP(+). Positions 182-327 constitute a KARI C-terminal knotted domain; the sequence is SFKEETETDL…ARLRSMMSWI (146 aa). Mg(2+)-binding residues include aspartate 190, glutamate 194, glutamate 226, and glutamate 230. Residue serine 251 coordinates substrate.

It belongs to the ketol-acid reductoisomerase family. It depends on Mg(2+) as a cofactor.

The catalysed reaction is (2R)-2,3-dihydroxy-3-methylbutanoate + NADP(+) = (2S)-2-acetolactate + NADPH + H(+). It carries out the reaction (2R,3R)-2,3-dihydroxy-3-methylpentanoate + NADP(+) = (S)-2-ethyl-2-hydroxy-3-oxobutanoate + NADPH + H(+). It participates in amino-acid biosynthesis; L-isoleucine biosynthesis; L-isoleucine from 2-oxobutanoate: step 2/4. The protein operates within amino-acid biosynthesis; L-valine biosynthesis; L-valine from pyruvate: step 2/4. Its function is as follows. Involved in the biosynthesis of branched-chain amino acids (BCAA). Catalyzes an alkyl-migration followed by a ketol-acid reduction of (S)-2-acetolactate (S2AL) to yield (R)-2,3-dihydroxy-isovalerate. In the isomerase reaction, S2AL is rearranged via a Mg-dependent methyl migration to produce 3-hydroxy-3-methyl-2-ketobutyrate (HMKB). In the reductase reaction, this 2-ketoacid undergoes a metal-dependent reduction by NADPH to yield (R)-2,3-dihydroxy-isovalerate. The chain is Ketol-acid reductoisomerase (NADP(+)) from Geobacter sulfurreducens (strain ATCC 51573 / DSM 12127 / PCA).